Reading from the N-terminus, the 188-residue chain is UPF0301 protein Cag_1601 (188 aa).

This sequence belongs to the UPF0301 (AlgH) family.

The chain is UPF0301 protein Cag_1601 from Chlorobium chlorochromatii (strain CaD3).